The following is a 1324-amino-acid chain: Myotubularin-related protein DDB_G0290005 (1324 aa).

Residues 140–276 (KYHDNTTPNN…TSSTNGNCST (137 aa)) form a disordered region. Positions 144 to 180 (NTTPNNNNNNNNNNNNNNNNTNNNNNNNINKSNNSST) are enriched in low complexity. The span at 181-194 (DQLNSFSLEKQPSQ) shows a compositional bias: polar residues. A compositionally biased stretch (low complexity) spans 195-222 (NENLNNNNNNNNNNNNGNNNINNNNLMN). Over residues 223–247 (SLTQPSTSSRSRLLKSNSTPINLNE) the composition is skewed to polar residues. Over residues 248–276 (SSTSTNSPTLSSTTTTTTTTSSTNGNCST) the composition is skewed to low complexity. The region spanning 349-807 (GWLFYDPIEE…KGVQLWSDYF (459 aa)) is the Myotubularin phosphatase domain. Substrate-binding positions include 514 to 515 (NI), 575 to 581 (CIDGWDR), and arginine 621. The active-site Phosphocysteine intermediate is cysteine 575. Disordered stretches follow at residues 624–664 (QSIS…TTTS), 841–1043 (QKKK…QQQE), 1066–1110 (EQQE…QQQT), 1144–1213 (RKQE…LTMP), and 1232–1296 (LHPN…DNTS). Low complexity-rich tracts occupy residues 625 to 664 (SISS…TTTS) and 852 to 864 (GASG…SGSS). Basic residues predominate over residues 865-882 (SKHHHHHHHHHHHHHHRK). Residues 883 to 894 (STDEKDSKEKSS) are compositionally biased toward basic and acidic residues. Low complexity-rich tracts occupy residues 899–914 (SRTS…STSS) and 927–973 (TITT…TTTP). Basic and acidic residues predominate over residues 988-1002 (DKLKSPSGDDIKQEQ). Residues 1005 to 1024 (MNQFTSQHPNNQMESSSEIN) show a composition bias toward polar residues. Positions 1020 to 1195 (SSEINQQNEQ…LEQQKPKADI (176 aa)) form a coiled coil. Low complexity predominate over residues 1025 to 1043 (QQNEQSQLEQQQEQQQQQE). Polar residues predominate over residues 1079–1090 (PNETITYSMESD). Low complexity predominate over residues 1091–1109 (SQSSISQNQNQLQQQQQQQ). Over residues 1144-1193 (RKQEKEKRKLEKEKKQKERAERKLEKEKKRDQKEREQKEKELLEQQKPKA) the composition is skewed to basic and acidic residues. A compositionally biased stretch (polar residues) spans 1234 to 1243 (PNLSDQNSQT). Composition is skewed to low complexity over residues 1244–1258 (NSSG…NSPN) and 1265–1294 (SNLS…NNDN).

This sequence belongs to the protein-tyrosine phosphatase family. Non-receptor class myotubularin subfamily.

Its subcellular location is the cytoplasm. Its function is as follows. Phosphatase that acts on lipids with a phosphoinositol headgroup. The polypeptide is Myotubularin-related protein DDB_G0290005 (Dictyostelium discoideum (Social amoeba)).